The primary structure comprises 357 residues: Glutamate 5-kinase (357 aa).

Lysine 7 serves as a coordination point for ATP. Serine 43, aspartate 130, and asparagine 142 together coordinate substrate. Residues 162 to 163 (TD) and 205 to 211 (TGGMTTK) each bind ATP. The 84-residue stretch at 270–353 (EGELQLDAGA…PVVVHRDGLV (84 aa)) folds into the PUA domain.

This sequence belongs to the glutamate 5-kinase family.

Its subcellular location is the cytoplasm. The catalysed reaction is L-glutamate + ATP = L-glutamyl 5-phosphate + ADP. It participates in amino-acid biosynthesis; L-proline biosynthesis; L-glutamate 5-semialdehyde from L-glutamate: step 1/2. Its function is as follows. Catalyzes the transfer of a phosphate group to glutamate to form L-glutamate 5-phosphate. The protein is Glutamate 5-kinase of Synechococcus sp. (strain CC9605).